A 686-amino-acid chain; its full sequence is MSPTAMSLTTTTSRLPICRAQGGGVAKEKRTTPPPAKITPPSSSSSEAAGLSRRRLLQSAGLGLGLGLTAARPARAEATAPEEVTSNRMSYSRFLEYLDAGAVKKVDFFENGTVAVAEVDDAAALSRVHRVKVQLPGLPAELVRKLRDKGVDFAAHPVEPSAGVMLLDLLVNFGFPLLFVASLLWRSPTMNNPGGGPSLPFGLGKSKAKFQMEPKTGVTFDDVAGVDEAKQDFQEIVQFLKFPEKFTAVGARTPKGVLLVGPPGTGKTLLAKAIAGEAGVPFFSLSGSEFIEMFVGVGASRVRDLFDRAKASAPCLVFIDEIDAVGRQRGAGIGGGNDEREQTLNQLLTEMDGFGGGDGGVVVIAATNRPEILDAALLRPGRFDRRVSVGLPDVRGREEILLVHGANKRLDPGVSLAVVAMRTPGFSGADLANLMNEAAILAGRRGKDRITVSEIDDSIDRIVAGLEGTSMTDGKSKMLVAYHEIGHAVCATLTAGHDEVQKVTLIPRGQARGLTWFLPGEEDPALVSRQQIFAGIVGGLGGRAAEEVVFGEPEVTTGAAGDLQQVTRVARRMVTAFGMSEIGPWALAEPAAQGGDVVLRMLARSSMSERLAADIDAAVRTIVDEAYEVAKAHVRRNRAAIDQLVDVLMEKETLGGDEFRAILSEHVDIGKERRETAARTQQLATA.

The segment covering 1-14 (MSPTAMSLTTTTSR) has biased composition (polar residues). Residues 1-52 (MSPTAMSLTTTTSRLPICRAQGGGVAKEKRTTPPPAKITPPSSSSSEAAGLS) are disordered. The N-terminal 75 residues, 1-75 (MSPTAMSLTT…LGLTAARPAR (75 aa)), are a transit peptide targeting the chloroplast. Residues 39-52 (TPPSSSSSEAAGLS) show a composition bias toward low complexity. Residues 164 to 184 (VMLLDLLVNFGFPLLFVASLL) traverse the membrane as a helical segment. Residue 261-268 (GPPGTGKT) coordinates ATP. Histidine 483 lines the Zn(2+) pocket. Glutamate 484 is an active-site residue. Histidine 487 and aspartate 562 together coordinate Zn(2+).

It in the N-terminal section; belongs to the AAA ATPase family. This sequence in the C-terminal section; belongs to the peptidase M41 family. The cofactor is Zn(2+).

The protein resides in the plastid. It is found in the chloroplast thylakoid membrane. Probable ATP-dependent zinc metallopeptidase. This Oryza sativa subsp. japonica (Rice) protein is ATP-dependent zinc metalloprotease FTSH 6, chloroplastic (FTSH6).